Here is a 231-residue protein sequence, read N- to C-terminus: NADH-ubiquinone oxidoreductase chain 4 (231 aa).

Helical transmembrane passes span 1–21 (PIAG…YGII), 34–54 (LFLP…LTCL), 61–80 (SLIA…AIII), 84–106 (WGLS…LFCL), 128–148 (ILPM…ATPP), and 169–189 (TIIL…HMFL).

This sequence belongs to the complex I subunit 4 family.

The protein resides in the mitochondrion membrane. It catalyses the reaction a ubiquinone + NADH + 5 H(+)(in) = a ubiquinol + NAD(+) + 4 H(+)(out). Functionally, core subunit of the mitochondrial membrane respiratory chain NADH dehydrogenase (Complex I) that is believed to belong to the minimal assembly required for catalysis. Complex I functions in the transfer of electrons from NADH to the respiratory chain. The immediate electron acceptor for the enzyme is believed to be ubiquinone. In Metlapilcoatlus nummifer (Mexican jumping pitviper), this protein is NADH-ubiquinone oxidoreductase chain 4 (MT-ND4).